The following is a 282-amino-acid chain: tRNA pseudouridine synthase B (282 aa).

The active-site Nucleophile is the Asp-39.

It belongs to the pseudouridine synthase TruB family. Type 1 subfamily.

The catalysed reaction is uridine(55) in tRNA = pseudouridine(55) in tRNA. Responsible for synthesis of pseudouridine from uracil-55 in the psi GC loop of transfer RNAs. This is tRNA pseudouridine synthase B from Borreliella afzelii (strain PKo) (Borrelia afzelii).